Reading from the N-terminus, the 156-residue chain is Succinate dehydrogenase assembly factor 2-B, mitochondrial (156 aa).

Residues M1–K12 constitute a mitochondrion transit peptide.

Belongs to the SDHAF2 family. Interacts with the flavoprotein subunit within the SDH catalytic dimer.

The protein localises to the mitochondrion matrix. Its function is as follows. Plays an essential role in the assembly of succinate dehydrogenase (SDH), an enzyme complex (also referred to as respiratory complex II) that is a component of both the tricarboxylic acid (TCA) cycle and the mitochondrial electron transport chain, and which couples the oxidation of succinate to fumarate with the reduction of ubiquinone (coenzyme Q) to ubiquinol. Required for flavinylation (covalent attachment of FAD) of the flavoprotein subunit of the SDH catalytic dimer. This is Succinate dehydrogenase assembly factor 2-B, mitochondrial from Drosophila willistoni (Fruit fly).